We begin with the raw amino-acid sequence, 160 residues long: SsrA-binding protein (160 aa).

The protein belongs to the SmpB family.

The protein localises to the cytoplasm. Required for rescue of stalled ribosomes mediated by trans-translation. Binds to transfer-messenger RNA (tmRNA), required for stable association of tmRNA with ribosomes. tmRNA and SmpB together mimic tRNA shape, replacing the anticodon stem-loop with SmpB. tmRNA is encoded by the ssrA gene; the 2 termini fold to resemble tRNA(Ala) and it encodes a 'tag peptide', a short internal open reading frame. During trans-translation Ala-aminoacylated tmRNA acts like a tRNA, entering the A-site of stalled ribosomes, displacing the stalled mRNA. The ribosome then switches to translate the ORF on the tmRNA; the nascent peptide is terminated with the 'tag peptide' encoded by the tmRNA and targeted for degradation. The ribosome is freed to recommence translation, which seems to be the essential function of trans-translation. This Haemophilus ducreyi (strain 35000HP / ATCC 700724) protein is SsrA-binding protein.